Consider the following 338-residue polypeptide: Ketol-acid reductoisomerase (NADP(+)) (338 aa).

Residues 3–183 enclose the KARI N-terminal Rossmann domain; sequence IDVFYDDDAD…GGARAGVIPT (181 aa). Residues 26–29, arginine 49, serine 52, serine 54, and 84–87 contribute to the NADP(+) site; these read YGSQ and DTSQ. Residue histidine 109 is part of the active site. Glycine 135 provides a ligand contact to NADP(+). The region spanning 184–329 is the KARI C-terminal knotted domain; the sequence is TFEAETVTDL…AKLRDLMSWV (146 aa). Residues aspartate 192, glutamate 196, glutamate 228, and glutamate 232 each contribute to the Mg(2+) site. Serine 253 lines the substrate pocket.

Belongs to the ketol-acid reductoisomerase family. The cofactor is Mg(2+).

It catalyses the reaction (2R)-2,3-dihydroxy-3-methylbutanoate + NADP(+) = (2S)-2-acetolactate + NADPH + H(+). The enzyme catalyses (2R,3R)-2,3-dihydroxy-3-methylpentanoate + NADP(+) = (S)-2-ethyl-2-hydroxy-3-oxobutanoate + NADPH + H(+). It functions in the pathway amino-acid biosynthesis; L-isoleucine biosynthesis; L-isoleucine from 2-oxobutanoate: step 2/4. It participates in amino-acid biosynthesis; L-valine biosynthesis; L-valine from pyruvate: step 2/4. Involved in the biosynthesis of branched-chain amino acids (BCAA). Catalyzes an alkyl-migration followed by a ketol-acid reduction of (S)-2-acetolactate (S2AL) to yield (R)-2,3-dihydroxy-isovalerate. In the isomerase reaction, S2AL is rearranged via a Mg-dependent methyl migration to produce 3-hydroxy-3-methyl-2-ketobutyrate (HMKB). In the reductase reaction, this 2-ketoacid undergoes a metal-dependent reduction by NADPH to yield (R)-2,3-dihydroxy-isovalerate. The sequence is that of Ketol-acid reductoisomerase (NADP(+)) from Corynebacterium jeikeium (strain K411).